A 179-amino-acid polypeptide reads, in one-letter code: M-phase-specific PLK1-interacting protein (179 aa).

The interval 1–135 (MQRQNFRPPT…RVREKRMSNE (135 aa)) is disordered. Position 37 is an asymmetric dimethylarginine (Arg-37). 2 positions are modified to phosphoserine: Ser-40 and Ser-47. Thr-51 is modified (phosphothreonine). Omega-N-methylarginine is present on Arg-57. Asymmetric dimethylarginine occurs at positions 59 and 68. Residues 60-71 (PYGSSHSPRHGG) are compositionally biased toward low complexity. Phosphoserine is present on Ser-72. Residue Arg-77 is modified to Asymmetric dimethylarginine. Residues 79–109 (GSPSPGGYPGSYSRSPAGSQQQFGYSPGQQQ) show a composition bias toward low complexity. Phosphoserine is present on residues Ser-80, Ser-82, Ser-93, Ser-104, and Ser-115. Residues 110–122 (THPQGSPRTSTPF) are compositionally biased toward polar residues. Omega-N-methylarginine is present on Arg-117. Residue Thr-120 is modified to Phosphothreonine. 2 positions are modified to phosphoserine: Ser-124 and Ser-133.

Interacts with PLK1; phosphorylation-dependent. Post-translationally, phosphorylated during mitosis in the cell cycle probably by CDK1. In terms of tissue distribution, expressed at highest levels in liver and kidney; intermediate expression in skeletal muscle, pancreas, heart and placenta; low expression in brain and lung. Expressed in epidermis and hair follicles.

The protein localises to the nucleus. The protein resides in the cytoplasm. It localises to the cytoskeleton. It is found in the microtubule organizing center. Its subcellular location is the centrosome. Its function is as follows. May play a role in maintenance of cell cycle integrity by regulating mitosis or cytokinesis. The chain is M-phase-specific PLK1-interacting protein (MPLKIP) from Homo sapiens (Human).